A 360-amino-acid polypeptide reads, in one-letter code: Insulin gene enhancer protein ISL-2 (360 aa).

LIM zinc-binding domains lie at A25–G86 and I87–R149. Residues A151–Q177 form a disordered region. 2 positions are modified to phosphoserine: S154 and S157. A DNA-binding region (homeobox) is located at residues T192–S251. The tract at residues G273–W302 is LIM-binding domain (LID). The residue at position 280 (S280) is a Phosphoserine. Residues S328–S337 are compositionally biased toward low complexity. Positions S328–T360 are disordered. Residues D338–T360 are compositionally biased toward polar residues.

As to quaternary structure, interacts with LHX4.

It is found in the nucleus. Functionally, transcriptional factor that defines subclasses of motoneurons that segregate into columns in the spinal cord and select distinct axon pathways. This is Insulin gene enhancer protein ISL-2 (Isl2) from Rattus norvegicus (Rat).